Consider the following 405-residue polypeptide: Patatin-like protein 2 (405 aa).

The 207-residue stretch at 24–230 folds into the PNPLA domain; it reads LSIDGGGVRG…AANNPTLCAM (207 aa). The GXGXXG motif lies at 28–33; sequence GGGVRG. The short motif at 66–70 is the GXSXG element; it reads GTSTG. Ser68 functions as the Nucleophile in the catalytic mechanism. The active-site Proton acceptor is Asp217. The DGA/G signature appears at 217 to 219; the sequence is DGG.

This sequence belongs to the patatin family.

In terms of biological role, possesses non-specific lipolytic acyl hydrolase (LAH) activity. Hydrolyzes phospholipids as well as galactolipids. May play a role in disease resistance. This chain is Patatin-like protein 2 (PLP2), found in Oryza sativa subsp. indica (Rice).